Reading from the N-terminus, the 103-residue chain is Co-chaperonin GroES (103 aa).

Belongs to the GroES chaperonin family. Heptamer of 7 subunits arranged in a ring. Interacts with the chaperonin GroEL.

The protein localises to the cytoplasm. Together with the chaperonin GroEL, plays an essential role in assisting protein folding. The GroEL-GroES system forms a nano-cage that allows encapsulation of the non-native substrate proteins and provides a physical environment optimized to promote and accelerate protein folding. GroES binds to the apical surface of the GroEL ring, thereby capping the opening of the GroEL channel. The polypeptide is Co-chaperonin GroES (Picosynechococcus sp. (strain ATCC 27264 / PCC 7002 / PR-6) (Agmenellum quadruplicatum)).